The following is a 433-amino-acid chain: tRNA-2-methylthio-N(6)-dimethylallyladenosine synthase (433 aa).

The 116-residue stretch at K3–A118 folds into the MTTase N-terminal domain. Positions 12, 49, 81, 150, 154, and 157 each coordinate [4Fe-4S] cluster. The Radical SAM core domain maps to S136 to E369. The TRAM domain occupies Q372 to L433.

This sequence belongs to the methylthiotransferase family. MiaB subfamily. As to quaternary structure, monomer. Requires [4Fe-4S] cluster as cofactor.

The protein localises to the cytoplasm. The enzyme catalyses N(6)-dimethylallyladenosine(37) in tRNA + (sulfur carrier)-SH + AH2 + 2 S-adenosyl-L-methionine = 2-methylsulfanyl-N(6)-dimethylallyladenosine(37) in tRNA + (sulfur carrier)-H + 5'-deoxyadenosine + L-methionine + A + S-adenosyl-L-homocysteine + 2 H(+). In terms of biological role, catalyzes the methylthiolation of N6-(dimethylallyl)adenosine (i(6)A), leading to the formation of 2-methylthio-N6-(dimethylallyl)adenosine (ms(2)i(6)A) at position 37 in tRNAs that read codons beginning with uridine. In Wolinella succinogenes (strain ATCC 29543 / DSM 1740 / CCUG 13145 / JCM 31913 / LMG 7466 / NCTC 11488 / FDC 602W) (Vibrio succinogenes), this protein is tRNA-2-methylthio-N(6)-dimethylallyladenosine synthase.